The following is an 866-amino-acid chain: Ribosome biogenesis protein BOP1 homolog (866 aa).

Disordered stretches follow at residues 1–180 (MVAN…EETR) and 214–241 (PPEA…EEDI). Acidic residues-rich tracts occupy residues 37–52 (VDDE…DEEN), 60–146 (GNDE…LEEP), and 167–179 (TAED…DEET). WD repeat units follow at residues 527–566 (GHTD…CIRT), 568–608 (PTGD…SLLV), 697–735 (KSKG…LLKK), 738–777 (PSCK…RPYQ), 781–820 (LHHS…DLLQ), and 836–866 (VNDF…RLYT).

Belongs to the WD repeat BOP1/ERB1 family.

It localises to the nucleus. It is found in the nucleolus. The protein localises to the nucleoplasm. Functionally, required for maturation of ribosomal RNAs and formation of the large ribosomal subunit. The chain is Ribosome biogenesis protein BOP1 homolog from Aedes aegypti (Yellowfever mosquito).